The sequence spans 909 residues: MTAKKLENNSNHAVTAEEVKILTDLLDESTRHLVGDEEFAKIKGLVKIAASSDHSQLESQIACLSNQEMIIVARYFATLPLLINITEDVDLATEVNLLNNTDKDYLGKLESTVDLVAEKDNAAEILSHVNVVPVLTAHPTQVQRKTILELTNKIHDQLRRHRDVKASTINRKEWTNQLRRYIEIIMQTDIIREKKLKVSNEIKNVMVYYPGSLIPAITKLTARYKELAREKGLNVDGATPITMGMWIGGDRDGNPYVTAETLRLSATIQSEVIFEYYVKALNDLYRTVSVSTSYVQPTPEVAELAKLSADNSPFRENEPYRRAFYYLESRLAHTEMELLDVFSKEAVVKKEAALKAPVYKDAYEFKKDLEAIKRSLIQNHDRAVTGGHFDALLEAIDVFGFHLATIDMRQDSSVNEACVAELLKSARICDNYSDLDEEEKIQILLSELNNDPRSLHSSNSPKSELLQRELKIYHTARLLKDTLGENVIKQHIISHTESISDMLEQAIMLKEYGLLDSEKARVQVVPLFETVEDLQNSREIMKRYLSFDIVKRWVASKGNYQEIMLGYSDSNKDGGYLASCWNLYKAQTELTAIGEEQGIKITFMHGRGGTVGRGGGPSYEAITSQPFGSIKDRIRTTEQGEIIQNKYGNKDAAYYNLEMLVSAAVDRMVSKQKVSQDHIQDFTASMDGIVEDSNRVYRELVFDNPHFHDYFFQATPIKEVSSLNIGSRPAARKKITELSGLRAIPWVFSWSQSRVMFPGWYGVGSAFKHFIDADPNNLKELQEMYQGWPFFHSLLSNVDMVLSKSNMEIAEKYADLCEDEATRSVFDIIKKEWELTKEVILQIEGHSKLLEDNPSLERSLDYRLPYFNVLNYVQLEMIKRGRQEKLSGIYESIIHITINGVASGLRNSG.

Residues histidine 138 and lysine 572 contribute to the active site.

The protein belongs to the PEPCase type 1 family. It depends on Mg(2+) as a cofactor.

The catalysed reaction is oxaloacetate + phosphate = phosphoenolpyruvate + hydrogencarbonate. Forms oxaloacetate, a four-carbon dicarboxylic acid source for the tricarboxylic acid cycle. The polypeptide is Phosphoenolpyruvate carboxylase (Lactobacillus delbrueckii subsp. bulgaricus (strain ATCC 11842 / DSM 20081 / BCRC 10696 / JCM 1002 / NBRC 13953 / NCIMB 11778 / NCTC 12712 / WDCM 00102 / Lb 14)).